The primary structure comprises 320 residues: Foldase protein PrsA (320 aa).

A signal peptide spans 1 to 20; it reads MKMINKLIVPVTASALLLGA. C21 is lipidated: N-palmitoyl cysteine. A lipid anchor (S-diacylglycerol cysteine) is attached at C21. The 107-residue stretch at 139-245 folds into the PpiC domain; the sequence is EDSKKASHIL…FGYHIIKADK (107 aa). The tract at residues 159–198 is disordered; sequence EGLDDKEAKQKAEEIQKEVSKDPSKFGEIAKKESMDTGSA.

It belongs to the PrsA family.

Its subcellular location is the cell membrane. It catalyses the reaction [protein]-peptidylproline (omega=180) = [protein]-peptidylproline (omega=0). Functionally, plays a major role in protein secretion by helping the post-translocational extracellular folding of several secreted proteins. The protein is Foldase protein PrsA of Staphylococcus aureus (strain bovine RF122 / ET3-1).